The chain runs to 121 residues: Type II secretion system protein I (121 aa).

A propeptide spans 1-6 (MKKQSG) (leader sequence). The residue at position 7 (M7) is an N-methylmethionine. Residues 7-27 (MTLIEVMVALVVFALAGLAVM) form a helical membrane-spanning segment.

The protein belongs to the GSP I family. In terms of assembly, type II secretion is composed of four main components: the outer membrane complex, the inner membrane complex, the cytoplasmic secretion ATPase and the periplasm-spanning pseudopilus. Interacts with core component PulG. Post-translationally, cleaved by prepilin peptidase. In terms of processing, methylated by prepilin peptidase at the amino group of the N-terminal methionine once the leader sequence is cleaved by prepilin peptidase.

Its subcellular location is the cell inner membrane. Functionally, component of the type II secretion system required for the energy-dependent secretion of extracellular factors such as proteases and toxins from the periplasm. Part of the pseudopilus tip complex that is critical for the recognition and binding of secretion substrates. This chain is Type II secretion system protein I (pulI), found in Klebsiella pneumoniae.